The following is a 248-amino-acid chain: Sugar fermentation stimulation protein homolog (248 aa).

Belongs to the SfsA family.

The polypeptide is Sugar fermentation stimulation protein homolog (Methylorubrum extorquens (strain PA1) (Methylobacterium extorquens)).